The following is a 369-amino-acid chain: Septin-5 (369 aa).

Thr-13 is subject to Phosphothreonine. In terms of domain architecture, Septin-type G spans 41–314 (KGFDFTLMVA…ENYRAHCIQQ (274 aa)). A G1 motif region spans residues 51–58 (GESGLGKS). Residues 51–58 (GESGLGKS), Thr-85, and Gly-111 contribute to the GTP site. The interval 108–111 (DTPG) is G3 motif. Position 168 is an omega-N-methylarginine (Arg-168). The segment at 189–192 (AKAD) is G4 motif. 190 to 198 (KADCLVPSE) contributes to the GTP binding site. Ser-225 is subject to Phosphoserine. The GTP site is built by Gly-248 and Arg-263. Ser-327 carries the post-translational modification Phosphoserine. Thr-336 is subject to Phosphothreonine. Positions 338-369 (DAETEKLIRMKDEELRRMQEMLQRMKQQMQDQ) form a coiled coil.

The protein belongs to the TRAFAC class TrmE-Era-EngA-EngB-Septin-like GTPase superfamily. Septin GTPase family. In terms of assembly, septins polymerize into heterooligomeric protein complexes that form filaments, and can associate with cellular membranes, actin filaments and microtubules. GTPase activity is required for filament formation. Interacts with SEPTIN2 and SEPTIN5. In platelets, associated with a complex containing STX4. Interacts with PRKN; this interaction leads to SEPTIN5 ubiquitination and degradation. Interacts with DYRK1A. Interacts with STX1A; in the cerebellar cortex. Phosphorylated by DYRK1A. In platelets, phosphorylated in response to thrombin, phorbol-12-myristate-13-acetate and collagen. Expressed at high levels in the CNS, as well as in heart and platelets (at protein level).

The protein localises to the cytoplasm. Its subcellular location is the cytoskeleton. In terms of biological role, filament-forming cytoskeletal GTPase. May play a role in cytokinesis (Potential). May play a role in platelet secretion. The protein is Septin-5 of Homo sapiens (Human).